Consider the following 278-residue polypeptide: uncharacterized protein (278 aa).

A run of 10 helical transmembrane segments spans residues 1–21, 30–50, 56–76, 92–112, 116–136, 146–166, 170–190, 209–229, 230–250, and 258–278; these read MLEI…GIAY, AFTA…PLAL, VVID…SFYI, IALP…TVIY, LSLN…IIYG, LFYA…LDFL, LPVS…LSFT, GIFL…SSSW, NVVQ…AIFL, and LVAG…PPLQ. EamA domains lie at 12–136 and 154–274; these read ICWA…IIYG and FSWA…LLLL.

It belongs to the EamA transporter family.

It localises to the cell membrane. This is an uncharacterized protein from Archaeoglobus fulgidus (strain ATCC 49558 / DSM 4304 / JCM 9628 / NBRC 100126 / VC-16).